The primary structure comprises 413 residues: Putative competence-damage inducible protein (413 aa).

This sequence belongs to the CinA family.

This is Putative competence-damage inducible protein from Halothermothrix orenii (strain H 168 / OCM 544 / DSM 9562).